The primary structure comprises 218 residues: Oxygen regulatory protein NreC (218 aa).

A Response regulatory domain is found at 2-119; sequence KIVIADDHAV…QLILAVRTVY (118 aa). Position 53 is a 4-aspartylphosphate (D53). The HTH luxR-type domain occupies 149 to 214; sequence SSDPFKILSK…ELVEYALKKK (66 aa). The segment at residues 173–192 is a DNA-binding region (H-T-H motif); it reads NKDIAEKLFVSVKTVEAHKT.

Phosphorylated by NreB.

The protein resides in the cytoplasm. Its function is as follows. Member of the two-component regulatory system NreB/NreC involved in the control of dissimilatory nitrate/nitrite reduction in response to oxygen. Phosphorylated NreC binds to a GC-rich palindromic sequence at the promoters of the nitrate (narGHJI) and nitrite (nir) reductase operons, as well as the putative nitrate transporter gene narT, and activates their expression. The polypeptide is Oxygen regulatory protein NreC (nreC) (Staphylococcus epidermidis (strain ATCC 35984 / DSM 28319 / BCRC 17069 / CCUG 31568 / BM 3577 / RP62A)).